The following is a 74-amino-acid chain: Psi-conotoxin PrIIIE (74 aa).

The signal sequence occupies residues 1 to 19; sequence MSKLGVLLTICLLLFPITA. The propeptide occupies 20–50; it reads LPVDGDQPADRPVERMQDNISSEQHPFFEKR. 3 disulfides stabilise this stretch: Cys54-Cys66, Cys55-Cys71, and Cys61-Cys72. Position 72 is a cysteine amide (Cys72).

The protein belongs to the conotoxin M superfamily. Expressed by the venom duct.

It is found in the secreted. Psi-conotoxins act on postsynaptic membranes, and act as non-competitive antagonist of nicotinic acetylcholine receptors (nAChR). Reversibly inhibits both adult- and fetal-types nAChR. The inhibition potency against the adult- (alpha-1/beta-1/epsilon/delta) is higher than against the fetal-type (alpha-1/beta-1/gamma/delta). Induces flaccid paralysis in goldfish, but does not induce any remarkable behavior in mice and does not block action potential in directly stimulated frog muscle preparations. The protein is Psi-conotoxin PrIIIE of Conus parius (Cone snail).